Consider the following 440-residue polypeptide: Metacaspase-1 (440 aa).

The disordered stretch occupies residues 1–134 (MFPGSGRKTY…NPQGFGQNSG (134 aa)). Residues 14–51 (APPPGPPNGYQYGPPPGAQGQYPPPQGYPPQGYPPQGY) are compositionally biased toward pro residues. A compositionally biased stretch (low complexity) spans 52 to 81 (PPQGYAPQGYPPQGYAPQGYAPQGYQQQGG). Residues 82–94 (QQQGGQQQGGQQQ) show a composition bias toward gly residues. The segment covering 98-110 (RQTYATQEAQNFG) has biased composition (polar residues). Active-site residues include His230 and Cys286.

This sequence belongs to the peptidase C14B family.

Its function is as follows. Involved in cell death (apoptosis). The chain is Metacaspase-1 (MCA1) from Debaryomyces hansenii (strain ATCC 36239 / CBS 767 / BCRC 21394 / JCM 1990 / NBRC 0083 / IGC 2968) (Yeast).